The primary structure comprises 107 residues: MSESVSKSSQPLASKQEKDGTEKRGRGRPRKQPSVSPGTALVGSQKEPSEVPTPKRPRGRPKGSKNKGTAKTRKVTTTPGRKPRGRPKKLEKEEEEGISQESSEEEQ.

The span at M1–A13 shows a compositional bias: polar residues. The tract at residues M1–Q107 is disordered. The residue at position 2 (S2) is an N-acetylserine. At K7 the chain carries N6-acetyllysine. ADP-ribosylserine is present on S8. S9 carries the post-translational modification ADP-ribosylserine; alternate. Phosphoserine; alternate is present on S9. Residue K15 is modified to N6-acetyllysine; alternate. K15 is covalently cross-linked (Glycyl lysine isopeptide (Lys-Gly) (interchain with G-Cter in SUMO2); alternate). Basic and acidic residues predominate over residues K15–R24. A DNA-binding region (a.T hook 1) is located at residues T21–K31. R26 carries the asymmetric dimethylarginine; alternate modification. R26 carries the post-translational modification Omega-N-methylarginine; alternate. R26 is subject to Symmetric dimethylarginine; alternate. A Phosphoserine; by HIPK2 and CDC2 modification is found at S36. Position 39 is a phosphothreonine (T39). A phosphoserine mark is found at S44 and S49. At T53 the chain carries Phosphothreonine; by HIPK2 and CDC2. 2 consecutive DNA-binding regions (a.T hook) follow at residues T53–G63 and T78–K89. The interval T53–T77 is interaction with HIPK2. Basic residues predominate over residues K55–K74. An asymmetric dimethylarginine; by PRMT6; alternate mark is found at R58 and R60. 2 positions are modified to omega-N-methylarginine; by PRMT6; alternate: R58 and R60. At T78 the chain carries Phosphothreonine; by HIPK2 and CDC2. Residues E93–Q107 show a composition bias toward acidic residues. S99, S102, and S103 each carry phosphoserine.

It belongs to the HMGA family. As to quaternary structure, interacts with HIPK2. Post-translationally, isoforms HMG-I and HMG-Y can be phosphorylated by HIPK2. Phosphorylation may modulate DNA-binding affinity. In terms of processing, methylation at Arg-58 is mutually exclusive with methylation at Arg-60.

The protein localises to the nucleus. It is found in the chromosome. HMG-I/Y bind preferentially to the minor groove of A+T rich regions in double-stranded DNA. It is suggested that these proteins could function in nucleosome phasing and in the 3'-end processing of mRNA transcripts. They are also involved in the transcription regulation of genes containing, or in close proximity to A+T-rich regions. In Rattus norvegicus (Rat), this protein is High mobility group protein HMG-I/HMG-Y (Hmga1).